The primary structure comprises 469 residues: MNPNQKIITIGSVSLTIATICFLMQIAILVTTVTLHFKQYECDSPANNQVMPCEPIIIERNITEIVYLTNTTIEKEICPKLVEYRNWSKPQCKITGFAPFSKDNSIRLSAGGDIWVTREPYVSCDPGKCYQFALGQGTTLDNKHSNDTIHDRTPHRTLLMNELGVPFHLGTRQVCIAWSSSSCHDGKAWLHVCVTGYDKNATASFIYDGRLVDSIGSWSQNILRTQESECVCINGTCTVVMTDGSASGRADTKILFIEEGKIVHTSPLSGSAQHVEECSCYPRYPGVRCICRDNWKGSNRPVVDINVKDYSIDSSYVCSGLVGDTPRNNDRSSSSYCRNPNNEKGTHGVKGWAFDDGNDVWMGRTISEDSRSGYETFKVIGGWSTPNSKLQINRQVIVDSDNRSGYSGIFSVEGKSCINRCFYVELIRGREQETRVWWTSNSIVVFCGTSGTYGTGSWPDGADINLMPI.

The Intravirion segment spans residues Met1–Thr9. Residues Ile10 to Val30 form a helical membrane-spanning segment. Positions Gly11 to Val33 are involved in apical transport and lipid raft association. Residues Thr31–Ile469 are Virion surface-facing. The tract at residues His36–Ser88 is hypervariable stalk region. N-linked (GlcNAc...) asparagine; by host glycans are attached at residues Asn61, Asn70, and Asn86. Positions Gln91 to Ile469 are head of neuraminidase. Cystine bridges form between Cys92–Cys417, Cys124–Cys129, Cys183–Cys230, Cys232–Cys237, Cys278–Cys291, Cys280–Cys289, Cys318–Cys337, and Cys421–Cys447. Arg118 lines the substrate pocket. An N-linked (GlcNAc...) asparagine; by host glycan is attached at Asn146. Catalysis depends on Asp151, which acts as the Proton donor/acceptor. Residue Arg152 coordinates substrate. 2 N-linked (GlcNAc...) asparagine; by host glycosylation sites follow: Asn200 and Asn234. Glu276–Glu277 contacts substrate. Arg292 lines the substrate pocket. Residues Asp293, Gly297, and Asp324 each contribute to the Ca(2+) site. Arg371 contacts substrate. Asn402 carries N-linked (GlcNAc...) asparagine; by host glycosylation. The Nucleophile role is filled by Tyr406.

It belongs to the glycosyl hydrolase 34 family. Homotetramer. Ca(2+) is required as a cofactor. Post-translationally, N-glycosylated.

It localises to the virion membrane. The protein localises to the host apical cell membrane. It catalyses the reaction Hydrolysis of alpha-(2-&gt;3)-, alpha-(2-&gt;6)-, alpha-(2-&gt;8)- glycosidic linkages of terminal sialic acid residues in oligosaccharides, glycoproteins, glycolipids, colominic acid and synthetic substrates.. Its activity is regulated as follows. Inhibited by the neuraminidase inhibitors zanamivir (Relenza) and oseltamivir (Tamiflu). These drugs interfere with the release of progeny virus from infected cells and are effective against all influenza strains. Resistance to neuraminidase inhibitors is quite rare. Functionally, catalyzes the removal of terminal sialic acid residues from viral and cellular glycoconjugates. Cleaves off the terminal sialic acids on the glycosylated HA during virus budding to facilitate virus release. Additionally helps virus spread through the circulation by further removing sialic acids from the cell surface. These cleavages prevent self-aggregation and ensure the efficient spread of the progeny virus from cell to cell. Otherwise, infection would be limited to one round of replication. Described as a receptor-destroying enzyme because it cleaves a terminal sialic acid from the cellular receptors. May facilitate viral invasion of the upper airways by cleaving the sialic acid moieties on the mucin of the airway epithelial cells. Likely to plays a role in the budding process through its association with lipid rafts during intracellular transport. May additionally display a raft-association independent effect on budding. Plays a role in the determination of host range restriction on replication and virulence. Sialidase activity in late endosome/lysosome traffic seems to enhance virus replication. The chain is Neuraminidase from Aves (whales).